A 474-amino-acid chain; its full sequence is Probable periplasmic serine endoprotease DegP-like (474 aa).

The N-terminal stretch at 1 to 26 (MTRMTRHLALWMLLSLAILASQSAMA) is a signal peptide. Active-site charge relay system residues include H116, D146, and S219. Residues 217–219 (GNS) and 274–278 (LGVMI) each bind substrate. PDZ domains lie at 263 to 354 (LRND…LRNG) and 360 to 462 (TVTV…YRSG).

It belongs to the peptidase S1C family.

The protein resides in the periplasm. It carries out the reaction Acts on substrates that are at least partially unfolded. The cleavage site P1 residue is normally between a pair of hydrophobic residues, such as Val-|-Val.. Functionally, might be efficient in the degradation of transiently denatured and unfolded proteins which accumulate in the periplasm following stress conditions. The sequence is that of Probable periplasmic serine endoprotease DegP-like (mucD) from Halomonas elongata (strain ATCC 33173 / DSM 2581 / NBRC 15536 / NCIMB 2198 / 1H9).